The sequence spans 138 residues: Basic phospholipase A2 Mtx-b (138 aa).

Residues 1–16 (MRALWIVAVLLVGVEG) form the signal peptide. 7 disulfide bridges follow: cysteine 42–cysteine 131, cysteine 44–cysteine 60, cysteine 59–cysteine 111, cysteine 65–cysteine 138, cysteine 66–cysteine 104, cysteine 73–cysteine 97, and cysteine 91–cysteine 102. Positions 43, 45, and 47 each coordinate Ca(2+). The active site involves histidine 63. Aspartate 64 is a Ca(2+) binding site. Residue aspartate 105 is part of the active site.

As to quaternary structure, heterodimer of an acidic subunit and a basic chain. The acidic subunit is non-toxic, without enzymatic activity and comprises 3 peptides that are cross-linked by 7 disulfide bridges. The basic subunit is toxic, has phospholipase A2 activity and is composed of a single chain. Ca(2+) serves as cofactor. In terms of tissue distribution, expressed by the venom gland.

The protein resides in the secreted. It catalyses the reaction a 1,2-diacyl-sn-glycero-3-phosphocholine + H2O = a 1-acyl-sn-glycero-3-phosphocholine + a fatty acid + H(+). Snake venom phospholipase A2 (PLA2) that inhibits neuromuscular transmission by blocking acetylcholine release from the nerve termini. PLA2 catalyzes the calcium-dependent hydrolysis of the 2-acyl groups in 3-sn-phosphoglycerides. The chain is Basic phospholipase A2 Mtx-b from Crotalus scutulatus scutulatus (Mojave rattlesnake).